We begin with the raw amino-acid sequence, 543 residues long: Probable protein kinase UbiB (543 aa).

The Protein kinase domain occupies 123-501; that stretch reads DFDSQALASA…QQRQGQSRYL (379 aa). Residues 129–137 and lysine 152 contribute to the ATP site; that span reads LASASIAQV. Residue aspartate 287 is the Proton acceptor of the active site. Residues 517 to 539 form a helical membrane-spanning segment; that stretch reads LADATEVSTGFIVAGALAWFIGW.

It belongs to the ABC1 family. UbiB subfamily.

The protein localises to the cell inner membrane. Its pathway is cofactor biosynthesis; ubiquinone biosynthesis [regulation]. Its function is as follows. Is probably a protein kinase regulator of UbiI activity which is involved in aerobic coenzyme Q (ubiquinone) biosynthesis. The chain is Probable protein kinase UbiB from Yersinia pseudotuberculosis serotype O:1b (strain IP 31758).